A 754-amino-acid polypeptide reads, in one-letter code: 5-methyltetrahydropteroyltriglutamate--homocysteine methyltransferase (754 aa).

5-methyltetrahydropteroyltri-L-glutamate is bound by residues 15–18 (RELK) and lysine 114. L-homocysteine contacts are provided by residues 430–432 (IGS) and glutamate 483. Residues 430–432 (IGS) and glutamate 483 contribute to the L-methionine site. Residues 514–515 (RC) and tryptophan 560 contribute to the 5-methyltetrahydropteroyltri-L-glutamate site. L-homocysteine is bound at residue aspartate 598. Aspartate 598 is a binding site for L-methionine. A 5-methyltetrahydropteroyltri-L-glutamate-binding site is contributed by glutamate 604. Zn(2+) is bound by residues histidine 641, cysteine 643, and glutamate 665. Histidine 694 serves as the catalytic Proton donor. Position 726 (cysteine 726) interacts with Zn(2+).

Belongs to the vitamin-B12 independent methionine synthase family. Requires Zn(2+) as cofactor.

The catalysed reaction is 5-methyltetrahydropteroyltri-L-glutamate + L-homocysteine = tetrahydropteroyltri-L-glutamate + L-methionine. It participates in amino-acid biosynthesis; L-methionine biosynthesis via de novo pathway; L-methionine from L-homocysteine (MetE route): step 1/1. Catalyzes the transfer of a methyl group from 5-methyltetrahydrofolate to homocysteine resulting in methionine formation. This Campylobacter jejuni subsp. jejuni serotype O:6 (strain 81116 / NCTC 11828) protein is 5-methyltetrahydropteroyltriglutamate--homocysteine methyltransferase.